The chain runs to 544 residues: Membrane protein insertase YidC (544 aa).

A run of 5 helical transmembrane segments spans residues 13–33, 343–363, 409–429, 461–481, and 506–526; these read LSLF…SNIL, WGLS…PLTF, LGGC…YSLV, LYFV…FTQL, and MPIM…IYWI.

This sequence belongs to the OXA1/ALB3/YidC family. Type 1 subfamily. As to quaternary structure, interacts with the Sec translocase complex via SecD. Specifically interacts with transmembrane segments of nascent integral membrane proteins during membrane integration.

It localises to the cell inner membrane. Required for the insertion and/or proper folding and/or complex formation of integral membrane proteins into the membrane. Involved in integration of membrane proteins that insert both dependently and independently of the Sec translocase complex, as well as at least some lipoproteins. Aids folding of multispanning membrane proteins. This Borreliella burgdorferi (strain ZS7) (Borrelia burgdorferi) protein is Membrane protein insertase YidC.